Consider the following 669-residue polypeptide: Glycine--tRNA ligase beta subunit (669 aa).

Belongs to the class-II aminoacyl-tRNA synthetase family. As to quaternary structure, tetramer of two alpha and two beta subunits.

The protein localises to the cytoplasm. It carries out the reaction tRNA(Gly) + glycine + ATP = glycyl-tRNA(Gly) + AMP + diphosphate. This Phenylobacterium zucineum (strain HLK1) protein is Glycine--tRNA ligase beta subunit.